The following is a 398-amino-acid chain: Succinate--CoA ligase [ADP-forming] subunit beta (398 aa).

Positions 9–254 (KAVLREFGVS…ETEEDAKEIE (246 aa)) constitute an ATP-grasp domain. ATP is bound by residues Lys-46, 53–55 (GRG), Glu-109, Ala-112, and Glu-117. Asn-209 and Asp-223 together coordinate Mg(2+). Residues Asn-274 and 331-333 (GIM) each bind substrate.

This sequence belongs to the succinate/malate CoA ligase beta subunit family. As to quaternary structure, heterotetramer of two alpha and two beta subunits. Mg(2+) serves as cofactor.

The catalysed reaction is succinate + ATP + CoA = succinyl-CoA + ADP + phosphate. It carries out the reaction GTP + succinate + CoA = succinyl-CoA + GDP + phosphate. Its pathway is carbohydrate metabolism; tricarboxylic acid cycle; succinate from succinyl-CoA (ligase route): step 1/1. In terms of biological role, succinyl-CoA synthetase functions in the citric acid cycle (TCA), coupling the hydrolysis of succinyl-CoA to the synthesis of either ATP or GTP and thus represents the only step of substrate-level phosphorylation in the TCA. The beta subunit provides nucleotide specificity of the enzyme and binds the substrate succinate, while the binding sites for coenzyme A and phosphate are found in the alpha subunit. The sequence is that of Succinate--CoA ligase [ADP-forming] subunit beta from Afipia carboxidovorans (strain ATCC 49405 / DSM 1227 / KCTC 32145 / OM5) (Oligotropha carboxidovorans).